We begin with the raw amino-acid sequence, 344 residues long: D-amino-acid oxidase (344 aa).

FAD-binding residues include Ala-11, Ser-14, Ser-49, Gly-53, Asn-55, and Ile-167. The (R)-lactate site is built by Tyr-229 and Arg-290. Positions 229 and 290 each coordinate anthranilate. FAD contacts are provided by Arg-290, Ser-321, Gly-324, Tyr-325, and Gln-326.

The protein belongs to the DAMOX/DASOX family. FAD is required as a cofactor.

The protein resides in the peroxisome. It carries out the reaction a D-alpha-amino acid + O2 + H2O = a 2-oxocarboxylate + H2O2 + NH4(+). It catalyses the reaction D-alanine + O2 + H2O = pyruvate + H2O2 + NH4(+). Functionally, catalyzes the oxidative deamination of D-amino acids with broad substrate specificity. Enables the organism to utilize D-amino acids as a source of nutrients. Enables the organism to utilize D-alanine as a source of nitrogen. This Komagataella phaffii (strain GS115 / ATCC 20864) (Yeast) protein is D-amino-acid oxidase.